A 252-amino-acid chain; its full sequence is MTRKDDYYNRAKQQGYRSRAAYKLKQLDEAADLINEGDTVVDLGAAPGGWLQVANELAGEAGTVVGVDLQRIDPIEGVETVRGDMTEDATREKVRALVGEADVVISDMAPNMTGEYSLDHARSVHLARMAFETALDLLAPNGDLVAKVFEGPDTDDLRADIDREFEYVRTIHPDASRDSSSELFMVAKGRLTAPVREGDTLEVEIDNLGDEGDGVAKVDGYTLFVSGAEPGDAPEVRVTDVKPRFGFAETLE.

S-adenosyl-L-methionine contacts are provided by Gly-48, Trp-50, Asp-68, Asp-84, and Asp-107. Lys-147 functions as the Proton acceptor in the catalytic mechanism. One can recognise a TRAM domain in the interval 194–252 (PVREGDTLEVEIDNLGDEGDGVAKVDGYTLFVSGAEPGDAPEVRVTDVKPRFGFAETLE).

Belongs to the class I-like SAM-binding methyltransferase superfamily. RNA methyltransferase RlmE family.

Its subcellular location is the cytoplasm. The catalysed reaction is uridine(2552) in 23S rRNA + S-adenosyl-L-methionine = 2'-O-methyluridine(2552) in 23S rRNA + S-adenosyl-L-homocysteine + H(+). Specifically methylates the uridine in position 2552 of 23S rRNA at the 2'-O position of the ribose in the fully assembled 50S ribosomal subunit. The sequence is that of Ribosomal RNA large subunit methyltransferase E from Natronomonas pharaonis (strain ATCC 35678 / DSM 2160 / CIP 103997 / JCM 8858 / NBRC 14720 / NCIMB 2260 / Gabara) (Halobacterium pharaonis).